The chain runs to 363 residues: Chorismate synthase (363 aa).

The tract at residues 44–63 is disordered; that stretch reads DLDRRKPGTSRHTTQRQEPD. Residues Arg-48 and Arg-54 each contribute to the NADP(+) site. FMN contacts are provided by residues 125–127, 237–238, Gly-277, 292–296, and Arg-318; these read RSS, NA, and KATSS.

The protein belongs to the chorismate synthase family. In terms of assembly, homotetramer. Requires FMNH2 as cofactor.

It carries out the reaction 5-O-(1-carboxyvinyl)-3-phosphoshikimate = chorismate + phosphate. It participates in metabolic intermediate biosynthesis; chorismate biosynthesis; chorismate from D-erythrose 4-phosphate and phosphoenolpyruvate: step 7/7. Catalyzes the anti-1,4-elimination of the C-3 phosphate and the C-6 proR hydrogen from 5-enolpyruvylshikimate-3-phosphate (EPSP) to yield chorismate, which is the branch point compound that serves as the starting substrate for the three terminal pathways of aromatic amino acid biosynthesis. This reaction introduces a second double bond into the aromatic ring system. This Pseudomonas fluorescens (strain SBW25) protein is Chorismate synthase.